The following is a 161-amino-acid chain: Large ribosomal subunit protein uL15 (161 aa).

The segment covering 1-13 (MKLNELRDNEGAA) has biased composition (basic and acidic residues). Positions 1 to 51 (MKLNELRDNEGAARKKKRVARGPGSGKGKTAGRGIKGQKSRSGVALNGYEG) are disordered. The span at 23-35 (PGSGKGKTAGRGI) shows a compositional bias: gly residues.

The protein belongs to the universal ribosomal protein uL15 family. Part of the 50S ribosomal subunit.

Functionally, binds to the 23S rRNA. In Cereibacter sphaeroides (strain ATCC 17023 / DSM 158 / JCM 6121 / CCUG 31486 / LMG 2827 / NBRC 12203 / NCIMB 8253 / ATH 2.4.1.) (Rhodobacter sphaeroides), this protein is Large ribosomal subunit protein uL15.